A 1257-amino-acid chain; its full sequence is LIM domain kinase 1 (1257 aa).

Positions 1 to 24 (MHHQQRLRANGGRGGTGLGAGSGP) are disordered. The interval 1 to 147 (MHHQQRLRAN…ERSKLYCGQC (147 aa)) is interaction with LATS1. Residues 11-24 (GGRGGTGLGAGSGP) are compositionally biased toward gly residues. 2 consecutive LIM zinc-binding domains span residues 31-93 (PLCA…RFGD) and 94-154 (ACQQ…RSCQ). The region spanning 174–274 (LVEIPKDATP…MLQLTVEHDP (101 aa)) is the PDZ domain. The Protein kinase domain occupies 401-686 (LVIGEKLGEG…PCFETLHVWL (286 aa)). ATP contacts are provided by residues 407–415 (LGEGFFGKV) and Lys-430. Asp-522 is a catalytic residue. Disordered stretches follow at residues 552–587 (LPSG…RQRR), 759–811 (QDIP…ERAL), and 881–900 (EELL…QHHR). Over residues 794–811 (QEERRNLTPDTESKERAL) the composition is skewed to basic and acidic residues. Ser-1000 is modified (phosphoserine). 3 disordered regions span residues 1010-1037 (AKQL…NPPL), 1085-1182 (SAQQ…EKVH), and 1212-1257 (AAGT…NTRC). Polar residues-rich tracts occupy residues 1085-1095 (SAQQQRTSSNH) and 1113-1125 (RTGS…SNCV). Low complexity-rich tracts occupy residues 1126 to 1137 (SPTRSSRPGSPT) and 1145 to 1166 (TAAT…HQQQ).

The protein belongs to the protein kinase superfamily. TKL Ser/Thr protein kinase family. In terms of assembly, interacts with LATS1, and this interaction inhibits phosphorylation of tsr/cofilin. Post-translationally, phosphorylated on serine and/or threonine residues by ROCK1. Phosphorylated by PAK4 resulting in increased LIMK1 ability to phosphorylate cofilin. May be dephosphorylated and inactivated by SSH1. Expressed throughout the imaginal disks of the eye, leg and wing.

Its subcellular location is the cytoplasm. It localises to the cleavage furrow. It is found in the midbody. It carries out the reaction L-seryl-[protein] + ATP = O-phospho-L-seryl-[protein] + ADP + H(+). The enzyme catalyses L-threonyl-[protein] + ATP = O-phospho-L-threonyl-[protein] + ADP + H(+). Functionally, protein kinase which regulates actin filament dynamics. Phosphorylates and inactivates the actin binding/depolymerizing factor tsr/cofilin, thereby stabilizing the actin cytoskeleton. Modulation of actin cytoskeleton dynamics may be essential for imaginal disk morphogenesis and axon guidance. The sequence is that of LIM domain kinase 1 (LIMK1) from Drosophila melanogaster (Fruit fly).